The following is a 261-amino-acid chain: tRNA threonylcarbamoyladenosine dehydratase (261 aa).

A helical transmembrane segment spans residues 230–250 (CANGFGAATMITATFGFFAVS).

Belongs to the HesA/MoeB/ThiF family.

The protein localises to the membrane. Catalyzes the ATP-dependent dehydration of threonylcarbamoyladenosine at position 37 (t(6)A37) to form cyclic t(6)A37 (ct(6)A37) in tRNAs that read codons beginning with adenine. The polypeptide is tRNA threonylcarbamoyladenosine dehydratase (tcdA) (Haemophilus influenzae (strain ATCC 51907 / DSM 11121 / KW20 / Rd)).